The primary structure comprises 149 residues: Acyl carrier protein 1, chloroplastic (149 aa).

Residues 1–59 (MAHCLAAVSSFSPSAVRRRLSSQVANVVSSRSSVSFHSRQMSFVSISSRPSSLRFKICC) constitute a chloroplast transit peptide. The Carrier domain maps to 69-144 (KETVDKVCMI…DAANLIEKLV (76 aa)). Ser-104 is modified (O-(pantetheine 4'-phosphoryl)serine).

The protein belongs to the acyl carrier protein (ACP) family. Post-translationally, 4'-phosphopantetheine is transferred from CoA to a specific serine of apo-ACP by acpS. This modification is essential for activity because fatty acids are bound in thioester linkage to the sulfhydryl of the prosthetic group.

Its subcellular location is the plastid. The protein localises to the chloroplast. The protein operates within lipid metabolism; fatty acid biosynthesis. Carrier of the growing fatty acid chain in fatty acid biosynthesis. In Hordeum vulgare (Barley), this protein is Acyl carrier protein 1, chloroplastic (ACL1.1).